Here is a 336-residue protein sequence, read N- to C-terminus: Phosphate acyltransferase (336 aa).

This sequence belongs to the PlsX family. Homodimer. Probably interacts with PlsY.

The protein localises to the cytoplasm. The catalysed reaction is a fatty acyl-[ACP] + phosphate = an acyl phosphate + holo-[ACP]. Its pathway is lipid metabolism; phospholipid metabolism. Catalyzes the reversible formation of acyl-phosphate (acyl-PO(4)) from acyl-[acyl-carrier-protein] (acyl-ACP). This enzyme utilizes acyl-ACP as fatty acyl donor, but not acyl-CoA. The chain is Phosphate acyltransferase from Pseudomonas putida (strain GB-1).